The following is a 56-amino-acid chain: Male determiner protein Yob (56 aa).

Male determiner protein (M-factor) that controls male somatic sexual differentiation. Acts as a dominant factor that regulates the mRNA splicing of doublesex (dsx) transcripts and promotes expression of male splice forms of dsx. In Anopheles gambiae (African malaria mosquito), this protein is Male determiner protein Yob.